Here is a 141-residue protein sequence, read N- to C-terminus: Large ribosomal subunit protein uL11 (141 aa).

This sequence belongs to the universal ribosomal protein uL11 family. In terms of assembly, part of the ribosomal stalk of the 50S ribosomal subunit. Interacts with L10 and the large rRNA to form the base of the stalk. L10 forms an elongated spine to which L12 dimers bind in a sequential fashion forming a multimeric L10(L12)X complex. In terms of processing, one or more lysine residues are methylated.

Forms part of the ribosomal stalk which helps the ribosome interact with GTP-bound translation factors. The chain is Large ribosomal subunit protein uL11 from Geobacillus thermodenitrificans (strain NG80-2).